The primary structure comprises 115 residues: MVKSTSKDAQDLFRSLRSAYSATPTNLKIIDLYVVFAVFTALIQVVYMALVGSFPFNSFLSGVLSCIGTAVLAVCLRIQVNKENKEFKDLAPERAFADFVLCNLVLHLVIINFLG.

Over 1-31 the chain is Cytoplasmic; it reads MVKSTSKDAQDLFRSLRSAYSATPTNLKIID. Residues 32–52 traverse the membrane as a helical segment; that stretch reads LYVVFAVFTALIQVVYMALVG. Residues 53 to 55 lie on the Lumenal side of the membrane; sequence SFP. The helical transmembrane segment at 56-76 threads the bilayer; the sequence is FNSFLSGVLSCIGTAVLAVCL. Residues 77 to 94 lie on the Cytoplasmic side of the membrane; it reads RIQVNKENKEFKDLAPER. A helical transmembrane segment spans residues 95-115; sequence AFADFVLCNLVLHLVIINFLG.

The protein belongs to the DAD/OST2 family. Component of the oligosaccharyltransferase (OST) complex. Ubiquitous.

The protein resides in the endoplasmic reticulum membrane. It participates in protein modification; protein glycosylation. In terms of biological role, subunit of the oligosaccharyl transferase (OST) complex that catalyzes the initial transfer of a defined glycan (Glc(3)Man(9)GlcNAc(2) in eukaryotes) from the lipid carrier dolichol-pyrophosphate to an asparagine residue within an Asn-X-Ser/Thr consensus motif in nascent polypeptide chains, the first step in protein N-glycosylation. N-glycosylation occurs cotranslationally and the complex associates with the Sec61 complex at the channel-forming translocon complex that mediates protein translocation across the endoplasmic reticulum (ER). All subunits are required for a maximal enzyme activity. The protein is Dolichyl-diphosphooligosaccharide--protein glycosyltransferase subunit DAD1 (DAD1) of Arabidopsis thaliana (Mouse-ear cress).